The following is a 404-amino-acid chain: Cytochrome b561 and DOMON domain-containing protein At2g04850 (404 aa).

A signal peptide spans 1–22 (MATLILSFLLLLLATKLPESLA). The DOMON domain occupies 43 to 173 (QQASIAWTYH…TKIHHVWNRG (131 aa)). Residues 180–380 (SPTIHPTTST…MEVNSWVVFC (201 aa)) enclose the Cytochrome b561 domain. The chain crosses the membrane as a helical span at residues 217-237 (VTHGVVNAISWGFLLPAGAVT). Heme b contacts are provided by H219 and H255. The chain crosses the membrane as a helical span at residues 256-276 (AAIQLTGFLLGTIGFSIGIVL). H288 serves as a coordination point for heme b. Residues 290–310 (SLGIATFTAAALQTLALLFRP) form a helical membrane-spanning segment. H324 contacts heme b. The next 2 helical transmembrane spans lie at 326–346 (FVGY…FEVL) and 359–379 (LCLS…WVVF).

Heme b is required as a cofactor.

The protein resides in the membrane. Its function is as follows. May act as a catecholamine-responsive trans-membrane electron transporter. The sequence is that of Cytochrome b561 and DOMON domain-containing protein At2g04850 from Arabidopsis thaliana (Mouse-ear cress).